The chain runs to 429 residues: UDP-glucuronate 4-epimerase 1 (429 aa).

The next 2 helical transmembrane spans lie at 36–56 (FLWA…QSFV) and 87–107 (GISV…SLAL). 89-120 (SVLVTGATGFVGSHVSLALRKRGDGVVGLDNF) contributes to the NAD(+) binding site. Tyr-239 (proton acceptor) is an active-site residue.

Belongs to the NAD(P)-dependent epimerase/dehydratase family. In terms of assembly, homodimer. In terms of tissue distribution, in root stele, leaves, siliques, flowers, pollen and stems.

Its subcellular location is the golgi apparatus. It is found in the golgi stack membrane. It carries out the reaction UDP-alpha-D-glucuronate = UDP-alpha-D-galacturonate. Inhibited by UDP-Xylose. UDP-D-glucuronate 4-epimerase involved in the synthesis of the negatively charged monosaccharide that forms the backbone of pectic cell wall components. The polypeptide is UDP-glucuronate 4-epimerase 1 (GAE1) (Arabidopsis thaliana (Mouse-ear cress)).